The sequence spans 617 residues: Urocanate reductase (617 aa).

The residue at position 70 (threonine 70) is an FMN phosphoryl threonine. FAD is bound by residues alanine 124, glutamate 143, asparagine 151, threonine 152, glycine 156, glycine 157, and aspartate 387. Arginine 446 (proton donor) is an active-site residue. FAD is bound by residues histidine 553, glutamate 582, and leucine 598.

This sequence belongs to the FAD-dependent oxidoreductase 2 family. FRD/SDH subfamily. FAD is required as a cofactor. FMN serves as cofactor.

The catalysed reaction is dihydrourocanate + A = urocanate + AH2. Catalyzes the two-electron reduction of urocanate to dihydrourocanate (also named imidazole propionate or deamino-histidine). Dihydrourocanate is present at higher concentrations in subjects with type 2 diabetes, and directly impairs glucose tolerance and insulin signaling at the level of insulin receptor substrate (IRS) through activation of p38 gamma (MAPK12)-p62-mTORC1. Therefore, the UrdA enzyme from the gut bacteria L.fermentum strain NBRC 3956 may contribute to the pathogenesis of type 2 diabetes by producing the microbial metabolite dihydrourocanate. This chain is Urocanate reductase, found in Limosilactobacillus fermentum (strain NBRC 3956 / LMG 18251) (Lactobacillus fermentum).